A 495-amino-acid chain; its full sequence is ATP synthase subunit beta, chloroplastic (495 aa).

172-179 (GGAGVGKT) is an ATP binding site.

It belongs to the ATPase alpha/beta chains family. In terms of assembly, F-type ATPases have 2 components, CF(1) - the catalytic core - and CF(0) - the membrane proton channel. CF(1) has five subunits: alpha(3), beta(3), gamma(1), delta(1), epsilon(1). CF(0) has four main subunits: a(1), b(1), b'(1) and c(9-12).

The protein localises to the plastid. It localises to the chloroplast thylakoid membrane. It catalyses the reaction ATP + H2O + 4 H(+)(in) = ADP + phosphate + 5 H(+)(out). In terms of biological role, produces ATP from ADP in the presence of a proton gradient across the membrane. The catalytic sites are hosted primarily by the beta subunits. The sequence is that of ATP synthase subunit beta, chloroplastic from Eucomis bicolor (King's flower).